A 241-amino-acid chain; its full sequence is Endothelial protein C receptor (241 aa).

An N-terminal signal peptide occupies residues 1–20 (MLTKFLSLLLLLLLLGCAFC). Over 21 to 213 (NSDGSQSLHM…GSQTGRSYTS (193 aa)) the chain is Extracellular. 5 N-linked (GlcNAc...) asparagine glycosylation sites follow: Asn-47, Asn-64, Asn-139, Asn-165, and Asn-175. The chain crosses the membrane as a helical span at residues 214 to 234 (LVLGILMGCFIIAGVAVGIFL). The Cytoplasmic segment spans residues 235 to 241 (CTGGRRC).

Its subcellular location is the membrane. Functionally, binds activated protein C. Enhances protein C activation by the thrombin-thrombomodulin complex; plays a role in the protein C pathway controlling blood coagulation. This Rattus norvegicus (Rat) protein is Endothelial protein C receptor (Procr).